A 665-amino-acid polypeptide reads, in one-letter code: Protein kinase domain-containing protein ppk2 (665 aa).

Disordered regions lie at residues 42-63 (PNDS…KKKF), 82-152 (GNST…LSRS), 187-217 (LNSQ…SSMN), and 286-343 (AESL…VGHP). The span at 82–104 (GNSTRSPPFHLQNQKSNGQSEVW) shows a compositional bias: polar residues. 2 stretches are compositionally biased toward low complexity: residues 137–152 (SLSR…LSRS) and 206–217 (TNRLSSSTSSMN). Residues 294-316 (SATTIQQGDVSSYPLSRSVSTPV) show a composition bias toward polar residues. Position 358 is a phosphoserine (S358). One can recognise a Protein kinase domain in the interval 388 to 637 (YTDFTKICQQ…NMLLETSSFL (250 aa)). Residues 394–402 (ICQQDTVGT) and K417 each bind ATP.

It is found in the cytoplasm. The protein is Protein kinase domain-containing protein ppk2 (ppk2) of Schizosaccharomyces pombe (strain 972 / ATCC 24843) (Fission yeast).